We begin with the raw amino-acid sequence, 441 residues long: Maltose-6'-phosphate glucosidase (441 aa).

4 to 70 (FSILIAGGGS…PQIKFSYSTN (67 aa)) is an NAD(+) binding site. Substrate-binding residues include arginine 93 and asparagine 147. A Mn(2+)-binding site is contributed by cysteine 169. Catalysis depends on aspartate 170, which acts as the Proton donor. Histidine 200 is a binding site for Mn(2+). Tyrosine 264 functions as the Proton acceptor in the catalytic mechanism. Arginine 284 contributes to the substrate binding site.

The protein belongs to the glycosyl hydrolase 4 family. As to quaternary structure, homotetramer. NAD(+) is required as a cofactor. The cofactor is Mn(2+). It depends on Fe(2+) as a cofactor. Co(2+) serves as cofactor. Requires Ni(2+) as cofactor.

It catalyses the reaction alpha-maltose 6'-phosphate + H2O = D-glucose 6-phosphate + D-glucose. It functions in the pathway glycan degradation; maltose degradation. Its function is as follows. Hydrolyzes a wide variety of 6-phospho-alpha-D-glucosides including maltose-6'P, trehalose-6P and the 6'-phosphorylated derivatives of the five linkage-isomeric alpha-D-glucosyl-D-fructoses: trehalulose-6'P, turanose-6'P, maltulose-6'P, leucrose-6'P, and palatinose-6'P. However, sucrose-6P is not a substrate for MalH, and this enzyme also fails to hydrolyze beta-O-linked phosphorylated disaccharides such as cellobiose-6'P and gentobiose-6'P. The polypeptide is Maltose-6'-phosphate glucosidase (malH) (Fusobacterium mortiferum).